Here is a 229-residue protein sequence, read N- to C-terminus: Chromophore lyase CpcT/CpeT 1 (229 aa).

It belongs to the CpcT/CpeT biliprotein lyase family.

In terms of biological role, covalently attaches a chromophore to Cys residue(s) of phycobiliproteins. The sequence is that of Chromophore lyase CpcT/CpeT 1 from Gloeobacter violaceus (strain ATCC 29082 / PCC 7421).